A 272-amino-acid chain; its full sequence is Tropinone reductase-like 1 (272 aa).

Residue 17–41 (IITGGASGIGACTAELFHENGAKVV) participates in NAD(+) binding. Substrate is bound at residue Ser-150. Catalysis depends on Tyr-163, which acts as the Proton acceptor.

This sequence belongs to the short-chain dehydrogenases/reductases (SDR) family.

Has no tropinone reductase activity. This chain is Tropinone reductase-like 1, found in Erythroxylum coca (Coca plant).